The sequence spans 195 residues: Nucleoside triphosphate pyrophosphatase (195 aa).

Catalysis depends on aspartate 70, which acts as the Proton acceptor.

The protein belongs to the Maf family. The cofactor is a divalent metal cation.

It localises to the cytoplasm. It carries out the reaction a ribonucleoside 5'-triphosphate + H2O = a ribonucleoside 5'-phosphate + diphosphate + H(+). The enzyme catalyses a 2'-deoxyribonucleoside 5'-triphosphate + H2O = a 2'-deoxyribonucleoside 5'-phosphate + diphosphate + H(+). In terms of biological role, nucleoside triphosphate pyrophosphatase. May have a dual role in cell division arrest and in preventing the incorporation of modified nucleotides into cellular nucleic acids. The chain is Nucleoside triphosphate pyrophosphatase from Cyanothece sp. (strain PCC 7425 / ATCC 29141).